Consider the following 323-residue polypeptide: MVFKINLPPEGLFARSLVISELLGLNNVGISIDNDVVNIERKEEFKDNLKNELSQFKLVFNKLKTYKKNYANEVNLAEKVFNGDVEEFFKEDKEEYFLPLIFPEIMEAEKWFGGWSGSGKGSKRTIGVNRQSFILSLLSLGKYQLVSYRAAKEQVTVLALVDTTVMSDMCKPSKKKELRVQSNLIAQLSHISRLLIFSTILDEQGCQEVLLLKEGTHRAEIYERNSHTSLRPLIRFWTLVDDDSVERRITSLANQSPDSLNKVSNYIFEGIRGTLSPVEVAYMIARETYLKEEQSPLTSWDVKKIREALERMRVEMEEVYSST.

As to quaternary structure, sometimes seen associated with the aCascade ribonucleoprotein complex, minimally composed of Csa2 and Cas5a, which binds crRNA. Other probable components of aCascade in strain P1 are Cas6 and Csa5, while SSO1399, Cas5b (SSO1400) and SSO1401 have sometimes been seen weakly associated. The Csa2-Cas5a-crRNA complex also binds target DNA homologous to crRNA, probably forming an R-loop. Purified aCascade forms a filament about 6 nm in width.

In terms of biological role, CRISPR (clustered regularly interspaced short palindromic repeat) is an adaptive immune system that provides protection against mobile genetic elements (viruses, transposable elements and conjugative plasmids). CRISPR clusters contain spacers, sequences complementary to antecedent mobile elements, and target invading nucleic acids. CRISPR clusters are transcribed and processed into CRISPR RNA (crRNA). The protein is Putative CRISPR-associated protein SSO1401 of Saccharolobus solfataricus (strain ATCC 35092 / DSM 1617 / JCM 11322 / P2) (Sulfolobus solfataricus).